The following is a 364-amino-acid chain: Histidinol-phosphate aminotransferase (364 aa).

Lys-226 bears the N6-(pyridoxal phosphate)lysine mark.

Belongs to the class-II pyridoxal-phosphate-dependent aminotransferase family. Histidinol-phosphate aminotransferase subfamily. In terms of assembly, homodimer. The cofactor is pyridoxal 5'-phosphate.

The enzyme catalyses L-histidinol phosphate + 2-oxoglutarate = 3-(imidazol-4-yl)-2-oxopropyl phosphate + L-glutamate. It participates in amino-acid biosynthesis; L-histidine biosynthesis; L-histidine from 5-phospho-alpha-D-ribose 1-diphosphate: step 7/9. This is Histidinol-phosphate aminotransferase from Campylobacter jejuni subsp. jejuni serotype O:23/36 (strain 81-176).